Reading from the N-terminus, the 684-residue chain is MSNKRKMLVTCALPYANGAIHLGHMLEHIQADIWVRFQRMRGHQVYFVCADDAHGTPIMLNAAKQGITPEQLIAKAKADHIADFQSFNISFDNYHSTHSEENRNITTAMYKTLRDKGLIKTRVISQLFDPEKQMFLPDRFVKGTCPKCQAEDQYGDNCEVCASTYSPMDLINPHSVVSGATPIVKQSEHFFFDLPNFEAMLKTWTHSGSLQPQIANKMQEWFESGLQQWDISRDAPYFGFPIPDTENKFFYVWLDAPIGYMASFKNLCDRTGLNYEEFWQKESKTELYHFIGKDIVYFHSLFWPAMLEGCDQRKPTNIFAHGYVTVDGVKMSKSRGTFIQASTYLKHIDPECLRYYYAAKLNERIEDLDLNLDDFVQRVNSDIVNKLVNLASRNASFITKRFAGNLADKLEDEALFAEFVAQASNIADHYEAREYNKAIRLIMDLCDKANKYVDDKAPWVIAKQADREAELHAVCSMGIELFRILISYLKPVLPQLATRAEAFLQTELRWDNIASPLLNQNVAPFKSLFSRLEKKQIDRVIEETKALFSTQPKTEQPQVASTMNDNQQQNIEPIAAEISIDDFAKLDLRVAKVIQCEAVPESNKLLKFQLDLGDHQRQVLSGIKAAYSKPEELNGRFVIMVANLAPRKMKFGLSEGMILSAGTGGADLFLLSGDCGIRPGMQVK.

The 'HIGH' region motif lies at Pro14–His24. Zn(2+) contacts are provided by Cys145, Cys148, Cys158, and Cys161. A 'KMSKS' region motif is present at residues Lys330 to Ser334. Lys333 is an ATP binding site. The region spanning Asp582–Lys684 is the tRNA-binding domain.

The protein belongs to the class-I aminoacyl-tRNA synthetase family. MetG type 1 subfamily. In terms of assembly, homodimer. Requires Zn(2+) as cofactor.

Its subcellular location is the cytoplasm. The catalysed reaction is tRNA(Met) + L-methionine + ATP = L-methionyl-tRNA(Met) + AMP + diphosphate. Functionally, is required not only for elongation of protein synthesis but also for the initiation of all mRNA translation through initiator tRNA(fMet) aminoacylation. This chain is Methionine--tRNA ligase, found in Haemophilus ducreyi (strain 35000HP / ATCC 700724).